A 140-amino-acid polypeptide reads, in one-letter code: 3-hydroxyacyl-[acyl-carrier-protein] dehydratase FabZ (140 aa).

The active site involves His-47.

This sequence belongs to the thioester dehydratase family. FabZ subfamily.

Its subcellular location is the cytoplasm. It catalyses the reaction a (3R)-hydroxyacyl-[ACP] = a (2E)-enoyl-[ACP] + H2O. In terms of biological role, involved in unsaturated fatty acids biosynthesis. Catalyzes the dehydration of short chain beta-hydroxyacyl-ACPs and long chain saturated and unsaturated beta-hydroxyacyl-ACPs. The protein is 3-hydroxyacyl-[acyl-carrier-protein] dehydratase FabZ of Streptococcus uberis (strain ATCC BAA-854 / 0140J).